The following is a 156-amino-acid chain: Small ribosomal subunit protein uS7 (156 aa).

Belongs to the universal ribosomal protein uS7 family. Part of the 30S ribosomal subunit. Contacts proteins S9 and S11.

In terms of biological role, one of the primary rRNA binding proteins, it binds directly to 16S rRNA where it nucleates assembly of the head domain of the 30S subunit. Is located at the subunit interface close to the decoding center, probably blocks exit of the E-site tRNA. This chain is Small ribosomal subunit protein uS7, found in Shewanella frigidimarina (strain NCIMB 400).